The following is a 764-amino-acid chain: 1,4-alpha-glucan branching enzyme GlgB (764 aa).

Residue Asp-434 is the Nucleophile of the active site. Glu-487 serves as the catalytic Proton donor.

It belongs to the glycosyl hydrolase 13 family. GlgB subfamily. As to quaternary structure, monomer.

The catalysed reaction is Transfers a segment of a (1-&gt;4)-alpha-D-glucan chain to a primary hydroxy group in a similar glucan chain.. The protein operates within glycan biosynthesis; glycogen biosynthesis. Functionally, catalyzes the formation of the alpha-1,6-glucosidic linkages in glycogen by scission of a 1,4-alpha-linked oligosaccharide from growing alpha-1,4-glucan chains and the subsequent attachment of the oligosaccharide to the alpha-1,6 position. The protein is 1,4-alpha-glucan branching enzyme GlgB of Nostoc sp. (strain PCC 7120 / SAG 25.82 / UTEX 2576).